We begin with the raw amino-acid sequence, 54 residues long: Relaxin (54 aa).

Pyrrolidone carboxylic acid is present on Gln-1. Disulfide bonds link Cys-13–Cys-41, Cys-25–Cys-54, and Cys-40–Cys-45.

This sequence belongs to the insulin family. Heterodimer of a B chain and an A chain linked by two disulfide bonds.

It is found in the secreted. Functionally, the function of relaxin in an oviparous species is not yet known. In Squalus acanthias (Spiny dogfish), this protein is Relaxin.